We begin with the raw amino-acid sequence, 159 residues long: 2-C-methyl-D-erythritol 2,4-cyclodiphosphate synthase (159 aa).

Aspartate 8 and histidine 10 together coordinate a divalent metal cation. 4-CDP-2-C-methyl-D-erythritol 2-phosphate-binding positions include 8–10 (DVH) and 34–35 (HS). Histidine 42 is an a divalent metal cation binding site. 4-CDP-2-C-methyl-D-erythritol 2-phosphate-binding positions include 56 to 58 (DIG), 61 to 65 (FPDTD), 100 to 106 (AQAPKML), 132 to 135 (TTTE), phenylalanine 139, and arginine 142.

The protein belongs to the IspF family. In terms of assembly, homotrimer. A divalent metal cation serves as cofactor.

It carries out the reaction 4-CDP-2-C-methyl-D-erythritol 2-phosphate = 2-C-methyl-D-erythritol 2,4-cyclic diphosphate + CMP. The protein operates within isoprenoid biosynthesis; isopentenyl diphosphate biosynthesis via DXP pathway; isopentenyl diphosphate from 1-deoxy-D-xylulose 5-phosphate: step 4/6. Functionally, involved in the biosynthesis of isopentenyl diphosphate (IPP) and dimethylallyl diphosphate (DMAPP), two major building blocks of isoprenoid compounds. Catalyzes the conversion of 4-diphosphocytidyl-2-C-methyl-D-erythritol 2-phosphate (CDP-ME2P) to 2-C-methyl-D-erythritol 2,4-cyclodiphosphate (ME-CPP) with a corresponding release of cytidine 5-monophosphate (CMP). The protein is 2-C-methyl-D-erythritol 2,4-cyclodiphosphate synthase of Escherichia coli O127:H6 (strain E2348/69 / EPEC).